Here is a 37-residue protein sequence, read N- to C-terminus: Large ribosomal subunit protein bL36 (37 aa).

It belongs to the bacterial ribosomal protein bL36 family.

The protein is Large ribosomal subunit protein bL36 of Cyanothece sp. (strain PCC 7425 / ATCC 29141).